The sequence spans 424 residues: Geranylgeranyl pyrophosphate synthase D (424 aa).

The disordered stretch occupies residues 42 to 73 (PSATWPSVPKVHKRNRSTSLSDQQTAKKAHAN). Over residues 58-67 (STSLSDQQTA) the composition is skewed to polar residues. Positions 147, 150, and 179 each coordinate isopentenyl diphosphate. Mg(2+)-binding residues include Asp186 and Asp190. A dimethylallyl diphosphate-binding site is contributed by Arg195. Residue Arg196 coordinates isopentenyl diphosphate. Residues Lys274, Thr275, Gln311, Lys328, and Lys338 each contribute to the dimethylallyl diphosphate site.

The protein belongs to the FPP/GGPP synthase family. Requires Mg(2+) as cofactor.

The protein resides in the cytoplasm. It catalyses the reaction isopentenyl diphosphate + dimethylallyl diphosphate = (2E)-geranyl diphosphate + diphosphate. The catalysed reaction is isopentenyl diphosphate + (2E)-geranyl diphosphate = (2E,6E)-farnesyl diphosphate + diphosphate. It carries out the reaction isopentenyl diphosphate + (2E,6E)-farnesyl diphosphate = (2E,6E,10E)-geranylgeranyl diphosphate + diphosphate. It functions in the pathway isoprenoid biosynthesis; farnesyl diphosphate biosynthesis; farnesyl diphosphate from geranyl diphosphate and isopentenyl diphosphate: step 1/1. Its pathway is isoprenoid biosynthesis; geranyl diphosphate biosynthesis; geranyl diphosphate from dimethylallyl diphosphate and isopentenyl diphosphate: step 1/1. It participates in isoprenoid biosynthesis; geranylgeranyl diphosphate biosynthesis; geranylgeranyl diphosphate from farnesyl diphosphate and isopentenyl diphosphate: step 1/1. Catalyzes the trans-addition of the 3 molecules of isopentenyl diphosphate (IPP) onto dimethylallyl diphosphate (DMAPP) to form geranylgeranyl pyrophosphate (GGDP). The protein is Geranylgeranyl pyrophosphate synthase D (GGS-D) of Phomopsis amygdali (Fusicoccum amygdali).